The chain runs to 190 residues: Elongation factor P-like protein (190 aa).

Belongs to the elongation factor P family.

The chain is Elongation factor P-like protein from Proteus mirabilis (strain HI4320).